The following is a 293-amino-acid chain: uncharacterized protein (293 aa).

Residues 1-58 (MDLRRFITLKTVVEEGSFLRASQKLCCTQSTVTFHIQQLEQEFSVQLFEKIGRRMCLT) form the HTH lysR-type domain. Residues 18–37 (FLRASQKLCCTQSTVTFHIQ) constitute a DNA-binding region (H-T-H motif).

Belongs to the LysR transcriptional regulatory family.

This is an uncharacterized protein from Escherichia coli (strain K12).